Consider the following 948-residue polypeptide: Valine--tRNA ligase (948 aa).

A 'HIGH' region motif is present at residues 40-50; that stretch reads PNVTGSLHMGH. A 'KMSKS' region motif is present at residues 551 to 555; the sequence is KMSKS. Residue Lys554 participates in ATP binding. The stretch at 879–945 forms a coiled coil; sequence LIDKGAELAR…GKLAEQHARI (67 aa).

The protein belongs to the class-I aminoacyl-tRNA synthetase family. ValS type 1 subfamily. In terms of assembly, monomer.

The protein localises to the cytoplasm. The enzyme catalyses tRNA(Val) + L-valine + ATP = L-valyl-tRNA(Val) + AMP + diphosphate. Its function is as follows. Catalyzes the attachment of valine to tRNA(Val). As ValRS can inadvertently accommodate and process structurally similar amino acids such as threonine, to avoid such errors, it has a 'posttransfer' editing activity that hydrolyzes mischarged Thr-tRNA(Val) in a tRNA-dependent manner. The polypeptide is Valine--tRNA ligase (Pseudomonas savastanoi pv. phaseolicola (strain 1448A / Race 6) (Pseudomonas syringae pv. phaseolicola (strain 1448A / Race 6))).